Consider the following 418-residue polypeptide: uncharacterized protein (418 aa).

Positions 7–158 (IDVRPIAEAE…TGLDPRWSGP (152 aa)) constitute an N-acetyltransferase domain. Acetyl-CoA is bound by residues 87-89 (VTV) and 95-100 (RRGLLT). Tyr-128 serves as the catalytic Proton donor. Phe-418 serves as the catalytic Proton acceptor; via carboxylate.

The protein belongs to the acetyltransferase Eis family. As to quaternary structure, homohexamer; trimer of dimers.

This is an uncharacterized protein from Streptomyces avermitilis (strain ATCC 31267 / DSM 46492 / JCM 5070 / NBRC 14893 / NCIMB 12804 / NRRL 8165 / MA-4680).